We begin with the raw amino-acid sequence, 688 residues long: Complement C1s-1 subcomponent (688 aa).

A signal peptide spans Met1 to Ala15. The CUB 1 domain maps to Glu16–Ile130. 6 residues coordinate Ca(2+): Glu60, Asp68, Asp113, Asp131, Ile132, and Glu134. Residues Cys65 and Cys83 are joined by a disulfide bond. One can recognise an EGF-like; calcium-binding domain in the interval Asp131–Gly172. Cystine bridges form between Cys135–Cys147, Cys143–Cys156, and Cys158–Cys171. The Ca(2+) site is built by Asn149, Phe150, and Gly153. A (3R)-3-hydroxyasparagine modification is found at Asn149. N-linked (GlcNAc...) asparagine glycosylation occurs at Asn174. Cysteines 175 and 202 form a disulfide. Residues Cys175–Asp290 form the CUB 2 domain. Positions 226, 236, 275, 278, and 279 each coordinate Ca(2+). Cys234 and Cys251 are disulfide-bonded. 2 consecutive Sushi domains span residues Ile292–Pro356 and Val357–Pro423. Disulfide bonds link Cys294–Cys341, Cys321–Cys354, Cys359–Cys403, Cys386–Cys421, Cys425–Cys549, Cys595–Cys618, and Cys627–Cys659. In terms of domain architecture, Peptidase S1 spans Ile438–Gln680. Active-site charge relay system residues include His475 and Asp529. The active-site Charge relay system is Ser631. N-linked (GlcNAc...) asparagine glycosylation occurs at Asn641.

It belongs to the peptidase S1 family. In terms of assembly, core component of the complement C1 complex, a calcium-dependent complex composed of 1 molecule of the C1Q subcomplex, 2 molecules of C1R and 2 molecules of C1S. The C1Q subcomplex is composed 18 subunits: 3 chains of C1QA, C1QB, and C1QC trimerize to form 6 collagen-like triple helices connected to six globular ligand-recognition modules. Cleaved and activated by C1R to generate Complement C1s subcomponent heavy and light chains. In terms of processing, the iron and 2-oxoglutarate dependent 3-hydroxylation of aspartate and asparagine is (R) stereospecific within EGF domains. Predominantly expressed in liver.

It localises to the secreted. Its subcellular location is the cell surface. The enzyme catalyses Cleavage of Arg-|-Ala bond in complement component C4 to form C4a and C4b, and Lys(or Arg)-|-Lys bond in complement component C2 to form C2a and C2b: the 'classical' pathway C3 convertase.. Its activity is regulated as follows. Cleaved and activated by C1R. Immunoglobulin-binding promotes autoactivation of C1R, which results in the cleavage of the Arg-Ile bond in the catalytic domain. Inhibited by C1 inhibitor (SERPING1). Its function is as follows. Component of the complement C1 complex, a multiprotein complex that initiates the classical pathway of the complement system, a cascade of proteins that leads to phagocytosis and breakdown of pathogens and signaling that strengthens the adaptive immune system. C1S is activated following association of the C1 complex with immunoglobulins (IgG or IgM) complexed with antigens to form antigen-antibody complexes on the surface of pathogens. C1S is cleaved and activated by C1R to generate C1s subcomponent heavy and light chains. C1s subcomponent light chain then cleaves and activates C2 and C4, the next components of the classical complement pathway. Functionally, serine protease component of the complement C1 complex, which catalyzes cleavage and activation of C2 and C4, the next components of the classical complement pathway. Also cleaves IGFBP5 and thereby inhibits the trophic effects of IGF1. The protein is Complement C1s-1 subcomponent of Mus musculus (Mouse).